The primary structure comprises 82 residues: Sec-independent protein translocase protein TatA (82 aa).

Residues 1–21 form a helical membrane-spanning segment; sequence MGSFSIWHWLIVLLIVVMVFG. Positions 46 to 82 are disordered; sequence GASTDDSATTSAPAGQVTNNSTAADKTTIDVEAKHKS. The segment covering 49–70 has biased composition (polar residues); sequence TDDSATTSAPAGQVTNNSTAAD. The span at 72 to 82 shows a compositional bias: basic and acidic residues; that stretch reads TTIDVEAKHKS.

The protein belongs to the TatA/E family. As to quaternary structure, the Tat system comprises two distinct complexes: a TatABC complex, containing multiple copies of TatA, TatB and TatC subunits, and a separate TatA complex, containing only TatA subunits. Substrates initially bind to the TatABC complex, which probably triggers association of the separate TatA complex to form the active translocon.

The protein localises to the cell inner membrane. Its function is as follows. Part of the twin-arginine translocation (Tat) system that transports large folded proteins containing a characteristic twin-arginine motif in their signal peptide across membranes. TatA could form the protein-conducting channel of the Tat system. In Acidovorax sp. (strain JS42), this protein is Sec-independent protein translocase protein TatA.